Consider the following 121-residue polypeptide: uncharacterized protein (121 aa).

A helical transmembrane segment spans residues 9 to 29; that stretch reads LTILIASIYIIFFVNAAPTLY. Positions 91 to 121 are disordered; it reads EELPTYPPTMTTPLETTPLDTSPPVLPSAIP. Low complexity predominate over residues 98–113; sequence PTMTTPLETTPLDTSP.

It localises to the host membrane. This is an uncharacterized protein from Alcelaphine herpesvirus 1 (strain C500) (AlHV-1).